Consider the following 1227-residue polypeptide: Codanin-1 (1227 aa).

An N-acetylalanine modification is found at Ala2. Residues 63-294 (RVLPQGPPTP…SLTDEPADPA (232 aa)) form a disordered region. Position 71 is a phosphothreonine (Thr71). Residues 128–137 (ARERGGRGLE) show a composition bias toward basic and acidic residues. Over residues 155–167 (GSGSPSRPSLTLS) the composition is skewed to low complexity. An interaction with ASF1A/B region spans residues 188 to 208 (PTGTKPSRRINPTPVSEERSL). A compositionally biased stretch (polar residues) spans 214–232 (CFTSPPISCVPSSQPSALD). Residues 247–260 (LQEEREMLRKERSK) are compositionally biased toward basic and acidic residues. Phosphoserine is present on residues Ser265 and Ser285. Helical transmembrane passes span 312 to 332 (CIAENLVPNLFLELFFVFQLL) and 626 to 646 (FAVVLLSLRLLAKFLGFVAFL).

Found in a cytosolic complex with ASF1A, ASF1B, IPO4 and histones H3.1 and H4. Ubiquitously expressed. Isoform 3 is not found in erythroid cells.

Its subcellular location is the cytoplasm. The protein resides in the nucleus. The protein localises to the membrane. May act as a negative regulator of ASF1 in chromatin assembly. This is Codanin-1 (CDAN1) from Homo sapiens (Human).